Reading from the N-terminus, the 522-residue chain is Amine oxidase [flavin-containing] (522 aa).

At 1–492 (MTANAYDVIV…WERNLPSVGG (492 aa)) the chain is on the cytoplasmic side. The residue at position 398 (Cys398) is an S-8alpha-FAD cysteine. The helical; Anchor for type IV membrane protein transmembrane segment at 493–513 (FLKFMGVSSFLAAATAAGLVA) threads the bilayer. The Mitochondrial intermembrane portion of the chain corresponds to 514–522 (CKKGLLPRC).

The protein belongs to the flavin monoamine oxidase family. As to quaternary structure, monomer, homo- or heterodimer (containing two subunits of similar size). Each subunit contains a covalently bound flavin. Enzymatically active as monomer. Requires FAD as cofactor. Strongest expression in brain and intestine, followed by liver, heart and gill. Little expression in spleen, eye or muscle. In brain, highest activity in noradrenergic and serotonergic cell groups and those of the habenulointerpeduncular pathway; moderate levels in dopaminergic cell clusters.

It localises to the mitochondrion outer membrane. It carries out the reaction a secondary aliphatic amine + O2 + H2O = a primary amine + an aldehyde + H2O2. The enzyme catalyses a primary methyl amine + O2 + H2O = an aldehyde + H2O2 + NH4(+). The catalysed reaction is serotonin + O2 + H2O = (5-hydroxyindol-3-yl)acetaldehyde + H2O2 + NH4(+). It catalyses the reaction 2-phenylethylamine + O2 + H2O = 2-phenylacetaldehyde + H2O2 + NH4(+). It carries out the reaction tyramine + O2 + H2O = (4-hydroxyphenyl)acetaldehyde + H2O2 + NH4(+). The enzyme catalyses dopamine + O2 + H2O = 3,4-dihydroxyphenylacetaldehyde + H2O2 + NH4(+). The catalysed reaction is (R)-adrenaline + O2 + H2O = (R)-3,4-dihydroxymandelaldehyde + methylamine + H2O2. It catalyses the reaction (R)-noradrenaline + O2 + H2O = (R)-3,4-dihydroxymandelaldehyde + H2O2 + NH4(+). It carries out the reaction kynuramine + O2 + H2O = 3-(2-aminophenyl)-3-oxopropanal + H2O2 + NH4(+). The enzyme catalyses tryptamine + O2 + H2O = indole-3-acetaldehyde + H2O2 + NH4(+). Inhibited by both clorgyline (selective MAOA inhibitor) and deprenyl (selective MAOB inhibitor). Catalyzes the oxidative deamination of biogenic and xenobiotic amines and has important functions in the metabolism of neuroactive and vasoactive amines in the central nervous system and peripheral tissues. Preferentially oxidizes serotonin and tyramine. Also catalyzes the oxidative deamination of kynuramine to 3-(2-aminophenyl)-3-oxopropanal that can spontaneously condense to 4-hydroxyquinoline. This is Amine oxidase [flavin-containing] from Danio rerio (Zebrafish).